We begin with the raw amino-acid sequence, 607 residues long: Chaperone protein DnaK (607 aa).

T174 bears the Phosphothreonine; by autocatalysis mark. Positions 579-592 (AQAQAQQQAGANAG) are enriched in low complexity. The tract at residues 579 to 607 (AQAQAQQQAGANAGSDKKDEDVAEAEVVD) is disordered.

It belongs to the heat shock protein 70 family.

In terms of biological role, acts as a chaperone. In Fusobacterium nucleatum subsp. nucleatum (strain ATCC 25586 / DSM 15643 / BCRC 10681 / CIP 101130 / JCM 8532 / KCTC 2640 / LMG 13131 / VPI 4355), this protein is Chaperone protein DnaK.